The primary structure comprises 77 residues: MGSLSIWHWIVVIAVVLLLFGRGKISDLMGDVAQGIKAFKKGMQDDDKAPEKTEPVKSIDHGATPSATRTDVGSKAV.

A helical transmembrane segment spans residues 1–21 (MGSLSIWHWIVVIAVVLLLFG). Over residues 43 to 60 (MQDDDKAPEKTEPVKSID) the composition is skewed to basic and acidic residues. Positions 43-77 (MQDDDKAPEKTEPVKSIDHGATPSATRTDVGSKAV) are disordered.

This sequence belongs to the TatA/E family. As to quaternary structure, the Tat system comprises two distinct complexes: a TatABC complex, containing multiple copies of TatA, TatB and TatC subunits, and a separate TatA complex, containing only TatA subunits. Substrates initially bind to the TatABC complex, which probably triggers association of the separate TatA complex to form the active translocon.

The protein resides in the cell inner membrane. Its function is as follows. Part of the twin-arginine translocation (Tat) system that transports large folded proteins containing a characteristic twin-arginine motif in their signal peptide across membranes. TatA could form the protein-conducting channel of the Tat system. The chain is Sec-independent protein translocase protein TatA from Bradyrhizobium sp. (strain BTAi1 / ATCC BAA-1182).